Consider the following 446-residue polypeptide: Tubulin beta-3 chain (446 aa).

8 residues coordinate GTP: glutamine 11, glutamate 69, serine 138, glycine 142, threonine 143, glycine 144, asparagine 204, and asparagine 226. Glutamate 69 is a binding site for Mg(2+). A disordered region spans residues 421 to 446; sequence EYQQYQDATAEEEDYEEEEEDEEVAA. Acidic residues predominate over residues 429–446; that stretch reads TAEEEDYEEEEEDEEVAA.

This sequence belongs to the tubulin family. Dimer of alpha and beta chains. A typical microtubule is a hollow water-filled tube with an outer diameter of 25 nm and an inner diameter of 15 nM. Alpha-beta heterodimers associate head-to-tail to form protofilaments running lengthwise along the microtubule wall with the beta-tubulin subunit facing the microtubule plus end conferring a structural polarity. Microtubules usually have 13 protofilaments but different protofilament numbers can be found in some organisms and specialized cells. Mg(2+) serves as cofactor. In terms of tissue distribution, expressed in roots, second node, leaf sheaths, and suspension cultured cells.

The protein resides in the cytoplasm. It localises to the cytoskeleton. Functionally, tubulin is the major constituent of microtubules, a cylinder consisting of laterally associated linear protofilaments composed of alpha- and beta-tubulin heterodimers. Microtubules grow by the addition of GTP-tubulin dimers to the microtubule end, where a stabilizing cap forms. Below the cap, tubulin dimers are in GDP-bound state, owing to GTPase activity of alpha-tubulin. This is Tubulin beta-3 chain (TUBB3) from Oryza sativa subsp. japonica (Rice).